A 500-amino-acid chain; its full sequence is Serine carboxypeptidase 3 (500 aa).

The first 21 residues, 1 to 21, serve as a signal peptide directing secretion; sequence MATARVSLILLVVVLAASACA. The propeptide occupies 22–73; sequence EGLRLPRDAKFPAAQAERLIRSLNLLPKEAGPTGAGDVPSVAPGELLERRVT. 3 disulfides stabilise this stretch: Cys126–Cys366, Cys294–Cys309, and Cys332–Cys337. The N-linked (GlcNAc...) asparagine glycan is linked to Asn144. Ser216 is a catalytic residue. The active site involves Asp404. Cys407 contacts substrate. His461 is an active-site residue. Residues 485-500 constitute a propeptide that is removed on maturation; the sequence is EEWLAELPEQPMYAAM.

This sequence belongs to the peptidase S10 family. In terms of assembly, monomer.

It catalyses the reaction Release of a C-terminal amino acid with broad specificity.. The polypeptide is Serine carboxypeptidase 3 (CBP3) (Oryza sativa subsp. japonica (Rice)).